The following is a 95-amino-acid chain: Large ribosomal subunit protein bL27 (95 aa).

A disordered region spans residues 1–21 (MAHKKGASSSRNGRDSNAQRL). The segment covering 7-19 (ASSSRNGRDSNAQ) has biased composition (polar residues).

It belongs to the bacterial ribosomal protein bL27 family.

The polypeptide is Large ribosomal subunit protein bL27 (Parafrankia sp. (strain EAN1pec)).